The following is a 308-amino-acid chain: UDP-N-acetylenolpyruvoylglucosamine reductase (308 aa).

One can recognise an FAD-binding PCMH-type domain in the interval 32-196 (VGGPAARLYK…ISAKLQLSPG (165 aa)). Residue Arg-176 is part of the active site. Residue Ser-225 is the Proton donor of the active site. Glu-296 is an active-site residue.

It belongs to the MurB family. FAD serves as cofactor.

It localises to the cytoplasm. It carries out the reaction UDP-N-acetyl-alpha-D-muramate + NADP(+) = UDP-N-acetyl-3-O-(1-carboxyvinyl)-alpha-D-glucosamine + NADPH + H(+). Its pathway is cell wall biogenesis; peptidoglycan biosynthesis. Functionally, cell wall formation. This Legionella pneumophila (strain Lens) protein is UDP-N-acetylenolpyruvoylglucosamine reductase.